A 380-amino-acid polypeptide reads, in one-letter code: SAM and SH3 domain-containing protein 3 (380 aa).

Positions 1–76 (MLRRKPSNAS…KSGKKLGKKW (76 aa)) are disordered. Residues 22-41 (LQRSSSFKDFAKSKPSSPVV) show a composition bias toward low complexity. 3 positions are modified to phosphoserine: serine 27, serine 34, and serine 42. Threonine 61 is modified (phosphothreonine). Serine 97 is modified (phosphoserine). 3 disordered regions span residues 98 to 174 (EEMA…TGPF), 237 to 256 (VGHA…KPKT), and 318 to 380 (TGSE…AGAP). Residue threonine 103 is modified to Phosphothreonine. Serine 110 is subject to Phosphoserine. A Phosphothreonine modification is found at threonine 112. Serine 113 carries the post-translational modification Phosphoserine. Residue tyrosine 116 is modified to Phosphotyrosine. Serine 120 carries the post-translational modification Phosphoserine. The segment covering 143–152 (RQASTGSELC) has biased composition (polar residues). A compositionally biased stretch (low complexity) spans 153–164 (SPSPGSGSFGEE). One can recognise an SH3 domain in the interval 173 to 234 (PFCGRARVHT…KFIYVDVLPE (62 aa)). The span at 241–255 (RPSRRQSKGKRPKPK) shows a compositional bias: basic residues. An SAM domain is found at 252–316 (PKPKTLHELL…LTAAELLLDY (65 aa)). Threonine 318 is subject to Phosphothreonine. Positions 318 to 327 (TGSEEAEEGA) are enriched in acidic residues. Residue serine 320 is modified to Phosphoserine.

In terms of biological role, may function as a signaling adapter protein in lymphocytes. The polypeptide is SAM and SH3 domain-containing protein 3 (SASH3) (Homo sapiens (Human)).